The sequence spans 512 residues: mRNA export factor (512 aa).

The segment at 1 to 242 (MATDIDMLID…PVPERKAPSA (242 aa)) is disordered. Positions 5–17 (IDMLIDLGLDLSD) match the Nuclear export signal motif. Phosphoserine; by host occurs at positions 16 and 18. Composition is skewed to acidic residues over residues 16–28 (SDSE…LERD) and 36–55 (PESD…EDPC). Residues 104–112 (VWSRLGTRR) are interaction with host ALYREF. The short motif at 110–138 (TRRSASPREPHGGKVARIQPPSTKAPHPR) is the Nuclear localization signal element. Position 113 is a phosphoserine; by host (Ser113). The span at 135-149 (PHPRGGRRGRRRGRG) shows a compositional bias: basic residues. The residue at position 138 (Arg138) is a Dimethylated arginine; by host. The segment at 138–152 (RGGRRGRRRGRGRYG) is RGG-box. Arg148 is subject to Omega-N-methylarginine; by host. A Dimethylated arginine; by host modification is found at Arg150. The span at 228 to 240 (ADGRAPVPERKAP) shows a compositional bias: basic and acidic residues. Zn(2+) contacts are provided by Cys400, His479, Cys483, and Cys488. The segment at 400 to 488 (CYLKARGLCG…HRQECSSRVC (89 aa)) adopts a CHC2-type zinc-finger fold.

Belongs to the HHV-1 ICP27 protein family. In terms of assembly, interacts with host RBP1; this interaction facilitates the RNA polymerase recruitment to viral transcription sites. Interacts (via the RGG box) with host ALYREF/THOC4; this interaction recruits ALYREF to viral replication compartments and probably directs viral mRNA to the TAP/NFX1 pathway. Interacts (via the RGG box) with host SRPK1; this interaction relocalizes SRPK1 to the nucleus and seems to alter its activity. Interacts with ICP4; this interaction modulates ICP4 DNA-binding activity. Interacts with host NXF1; this interaction allows efficient export of HSV-1 early and late transcripts. Interacts with host IRF3; this interaction inhibits IRF3 phosphorylation and nuclear translocation. In terms of processing, methylated within the RGG box possibly by host PRMT1. When hypomethylated, ICP27 is exported to the cytoplasm earlier and more rapidly. Post-translationally, phosphorylated.

Its subcellular location is the host cytoplasm. The protein resides in the host nucleus. Its function is as follows. Multifunctional regulator of the expression of viral genes that contributes to the shutoff of host protein synthesis and mediates nuclear export of viral intronless mRNAs. Also stimulates translation of viral transcripts. Independently, plays a role in the regulation of virion release. Also plays a role in the inhibition of host innate immune response by targeting host IRF3 and thereby preventing production of beta-interferon. Silences the 3' splice site of the host promyelocytic leukemia (PML) intron 7a, thereby switching PML isoforms from PML-II to PML-V. This could be linked to the accelerated mRNA export induced by ICP27 which might not provide sufficient time for PML pre-mRNA to be spliced in the nucleus. Also suppresses splicing of the viral ICP34.5 mRNA, allowing the virus to express a variant form of ICP34.5. The protein is mRNA export factor of Human herpesvirus 2 (strain HG52) (HHV-2).